A 301-amino-acid polypeptide reads, in one-letter code: Homoserine kinase (301 aa).

81-91 (RPSSGLGSSAA) contacts ATP.

It belongs to the GHMP kinase family. Homoserine kinase subfamily.

It localises to the cytoplasm. The enzyme catalyses L-homoserine + ATP = O-phospho-L-homoserine + ADP + H(+). The protein operates within amino-acid biosynthesis; L-threonine biosynthesis; L-threonine from L-aspartate: step 4/5. Catalyzes the ATP-dependent phosphorylation of L-homoserine to L-homoserine phosphate. In Halobacterium salinarum (strain ATCC 29341 / DSM 671 / R1), this protein is Homoserine kinase.